The sequence spans 191 residues: Cyclin-dependent kinase inhibitor 1 (191 aa).

The interval 62–81 is disordered; the sequence is LIHLEEEDKDGDTETSTYRR. Residues 162–191 are required for inhibitory function and interaction with CDK kinase complexes; the sequence is QLKEKFKKKYNFDFEKEKPLEGRYEWVKLE.

The protein belongs to the CDI family. ICK/KRP subfamily. As to quaternary structure, specifically interacts with CDKA-1, but not with CDKB1-1. Interacts with CYCD2-1 and CYCD3-1. Post-translationally, ubiquitinated independently by RKP and SCF (SKP1-CUL1-FBL5/SKP2B) protein ligase complex, leading to proteasomal degradation. In terms of tissue distribution, expressed at low levels in roots, stems, leaves and flowers.

It localises to the nucleus. The protein resides in the nucleoplasm. In terms of biological role, binds and inhibits CYCD2-1/CDKA-1 kinase complex activity. Regulates cell division which is crucial for plant growth, development and morphogenesis. Functions in turning cells from a mitotic to an endoreplicating cell cycle mode. Acts cell- and non-cell-autonomously to regulate endoreduplication by allowing S phase progression, but blocking entry into mitosis. Keeps on the one hand the plant cell cycle locally controlled, and on the other hand provides a possibility of linking cell cycle control in single cells with the supracellular organization of a tissue or an organ. May target specifically CDKA-1. The protein is Cyclin-dependent kinase inhibitor 1 (KRP1) of Arabidopsis thaliana (Mouse-ear cress).